The chain runs to 326 residues: Porphobilinogen deaminase (326 aa).

At cysteine 251 the chain carries S-(dipyrrolylmethanemethyl)cysteine.

This sequence belongs to the HMBS family. Dipyrromethane is required as a cofactor.

The enzyme catalyses 4 porphobilinogen + H2O = hydroxymethylbilane + 4 NH4(+). It functions in the pathway porphyrin-containing compound metabolism; protoporphyrin-IX biosynthesis; coproporphyrinogen-III from 5-aminolevulinate: step 2/4. Tetrapolymerization of the monopyrrole PBG into the hydroxymethylbilane pre-uroporphyrinogen in several discrete steps. The protein is Porphobilinogen deaminase (HEM3) of Eremothecium gossypii (strain ATCC 10895 / CBS 109.51 / FGSC 9923 / NRRL Y-1056) (Yeast).